Here is a 104-residue protein sequence, read N- to C-terminus: Large ribosomal subunit protein uL24 (104 aa).

Belongs to the universal ribosomal protein uL24 family. In terms of assembly, part of the 50S ribosomal subunit.

One of two assembly initiator proteins, it binds directly to the 5'-end of the 23S rRNA, where it nucleates assembly of the 50S subunit. In terms of biological role, one of the proteins that surrounds the polypeptide exit tunnel on the outside of the subunit. This is Large ribosomal subunit protein uL24 from Shewanella pealeana (strain ATCC 700345 / ANG-SQ1).